We begin with the raw amino-acid sequence, 316 residues long: N-acetylmuramic acid 6-phosphate etherase (316 aa).

The SIS domain maps to 68–231; it reads ITDRLRSGGR…STCAMVRLGK (164 aa). The Proton donor role is filled by Glu-96. Glu-127 is a catalytic residue.

Belongs to the GCKR-like family. MurNAc-6-P etherase subfamily. Homodimer.

The catalysed reaction is N-acetyl-D-muramate 6-phosphate + H2O = N-acetyl-D-glucosamine 6-phosphate + (R)-lactate. It participates in amino-sugar metabolism; N-acetylmuramate degradation. Its function is as follows. Specifically catalyzes the cleavage of the D-lactyl ether substituent of MurNAc 6-phosphate, producing GlcNAc 6-phosphate and D-lactate. The polypeptide is N-acetylmuramic acid 6-phosphate etherase (Prochlorococcus marinus (strain MIT 9303)).